The following is a 407-amino-acid chain: Na(+)-translocating NADH-quinone reductase subunit F (407 aa).

The helical transmembrane segment at 3–23 (IILGVVMFTLIVLALVLVILF) threads the bilayer. The region spanning 32 to 126 (GDITISINGD…DMDIELPEEI (95 aa)) is the 2Fe-2S ferredoxin-type domain. The [2Fe-2S] cluster site is built by Cys-69, Cys-75, Cys-78, and Cys-110. The FAD-binding FR-type domain maps to 129–269 (VKKWECTVIS…SGPFGEFFAK (141 aa)). The tract at residues 272–389 (DAEMVFIGGG…PMMNAAVIGM (118 aa)) is catalytic.

Belongs to the NqrF family. Composed of six subunits; NqrA, NqrB, NqrC, NqrD, NqrE and NqrF. The cofactor is [2Fe-2S] cluster. It depends on FAD as a cofactor.

It is found in the cell inner membrane. The enzyme catalyses a ubiquinone + n Na(+)(in) + NADH + H(+) = a ubiquinol + n Na(+)(out) + NAD(+). NQR complex catalyzes the reduction of ubiquinone-1 to ubiquinol by two successive reactions, coupled with the transport of Na(+) ions from the cytoplasm to the periplasm. The first step is catalyzed by NqrF, which accepts electrons from NADH and reduces ubiquinone-1 to ubisemiquinone by a one-electron transfer pathway. This is Na(+)-translocating NADH-quinone reductase subunit F from Vibrio anguillarum (Listonella anguillarum).